The sequence spans 180 residues: Ribulose bisphosphate carboxylase small subunit 1A, chloroplastic (180 aa).

A chloroplast-targeting transit peptide spans Met1–Asn54. Ser113 carries the phosphoserine modification.

Belongs to the RuBisCO small chain family. Heterohexadecamer of 8 large and 8 small subunits.

It localises to the plastid. It is found in the chloroplast membrane. Its subcellular location is the chloroplast stroma. In terms of biological role, ruBisCO catalyzes two reactions: the carboxylation of D-ribulose 1,5-bisphosphate, the primary event in carbon dioxide fixation, as well as the oxidative fragmentation of the pentose substrate. Both reactions occur simultaneously and in competition at the same active site. Although the small subunit is not catalytic it is essential for maximal activity. This is Ribulose bisphosphate carboxylase small subunit 1A, chloroplastic (RBCS-1A) from Arabidopsis thaliana (Mouse-ear cress).